We begin with the raw amino-acid sequence, 375 residues long: N-acetyldiaminopimelate deacetylase (375 aa).

The active site involves D69. The Proton acceptor role is filled by E128.

Belongs to the peptidase M20A family. N-acetyldiaminopimelate deacetylase subfamily.

The enzyme catalyses N-acetyl-(2S,6S)-2,6-diaminopimelate + H2O = (2S,6S)-2,6-diaminopimelate + acetate. It participates in amino-acid biosynthesis; L-lysine biosynthesis via DAP pathway; LL-2,6-diaminopimelate from (S)-tetrahydrodipicolinate (acetylase route): step 3/3. Its function is as follows. Catalyzes the conversion of N-acetyl-diaminopimelate to diaminopimelate and acetate. This chain is N-acetyldiaminopimelate deacetylase, found in Priestia megaterium (strain ATCC 12872 / QMB1551) (Bacillus megaterium).